A 69-amino-acid chain; its full sequence is Alpha-elapitoxin-Lc2c (69 aa).

4 cysteine pairs are disulfide-bonded: C3/C20, C13/C41, C45/C56, and C57/C62.

This sequence belongs to the three-finger toxin family. Long-chain subfamily. Type II alpha-neurotoxin sub-subfamily. In terms of tissue distribution, expressed by the venom gland.

It is found in the secreted. Functionally, binds with high affinity to muscular nicotinic acetylcholine receptors (nAChRs), whereas it binds with a low affinity to neuronal alpha-7/CHRNA7 nAChRs. The chain is Alpha-elapitoxin-Lc2c from Laticauda colubrina (Yellow-lipped sea krait).